A 354-amino-acid polypeptide reads, in one-letter code: Uroporphyrinogen decarboxylase (354 aa).

Substrate-binding positions include 27-31 (RRAGR), Phe46, Asp77, Tyr154, Thr209, and His327.

It belongs to the uroporphyrinogen decarboxylase family. Homodimer.

The protein localises to the cytoplasm. It catalyses the reaction uroporphyrinogen III + 4 H(+) = coproporphyrinogen III + 4 CO2. It participates in porphyrin-containing compound metabolism; protoporphyrin-IX biosynthesis; coproporphyrinogen-III from 5-aminolevulinate: step 4/4. Catalyzes the decarboxylation of four acetate groups of uroporphyrinogen-III to yield coproporphyrinogen-III. This chain is Uroporphyrinogen decarboxylase, found in Salmonella typhimurium (strain LT2 / SGSC1412 / ATCC 700720).